We begin with the raw amino-acid sequence, 2319 residues long: Neurogenic locus notch homolog protein 3 (2319 aa).

The segment covering 1 to 14 (MGPGARGRRRRRRL) has biased composition (basic residues). Residues 1-20 (MGPGARGRRRRRRLMALPPP) form a disordered region. The N-terminal stretch at 1–40 (MGPGARGRRRRRRLMALPPPPPPMRALPLLLLLLAGLGAA) is a signal peptide. 3 consecutive EGF-like domains span residues 41 to 79 (APPC…ERCQ), 80 to 120 (LEDP…PDCS), and 121 to 158 (LPDP…RNCR). Topologically, residues 41–1645 (APPCLDGSPC…LEPPEQSVPL (1605 aa)) are extracellular. 99 disulfides stabilise this stretch: C44/C56, C50/C67, C69/C78, C84/C95, C89/C108, C110/C119, C125/C136, C130/C146, C148/C157, C164/C176, C170/C185, C187/C196, C203/C214, C208/C224, C226/C235, C242/C253, C247/C262, C264/C273, C280/C293, C287/C302, C304/C313, C320/C331, C325/C340, C342/C351, C357/C368, C362/C379, C381/C390, C397/C410, C404/C419, C421/C430, C437/C448, C442/C457, C459/C468, C475/C486, C480/C495, C497/C506, C513/C524, C518/C533, C535/C544, C551/C561, C556/C570, C572/C581, C588/C599, C593/C608, C610/C619, C626/C636, C631/C645, C647/C656, C663/C674, C668/C683, C685/C694, C701/C711, C706/C720, C722/C731, C740/C751, C745/C760, C762/C771, C777/C788, C782/C798, C800/C809, C816/C828, C822/C837, C839/C848, C855/C866, C860/C875, C877/C886, C893/C903, C898/C912, C914/C923, C930/C941, C935/C950, C952/C961, C968/C979, C973/C988, C990/C999, C1006/C1017, C1011/C1024, C1026/C1035, C1042/C1063, C1057/C1072, C1074/C1083, C1090/C1101, C1095/C1110, C1112/C1121, C1128/C1139, C1133/C1148, C1150/C1159, C1166/C1184, C1178/C1193, C1195/C1204, C1211/C1224, C1216/C1234, C1236/C1245, C1252/C1263, C1257/C1277, C1279/C1288, C1295/C1306, C1300/C1315, and C1317/C1326. An EGF-like 4; calcium-binding domain is found at 160-197 (DIDECRAGASCRHGGTCINTPGSFHCLCPLGYTGLLCE). The EGF-like 5 domain occupies 199 to 236 (PIVPCAPSPCRNGGTCRQSSDVTYDCACLPGFEGQNCE). Positions 238-274 (NVDDCPGHRCLNGGTCVDGVNTYNCQCPPEWTGQFCT) constitute an EGF-like 6; calcium-binding domain. The 39-residue stretch at 276-314 (DVDECQLQPNACHNGGTCFNLLGGHSCVCVNGWTGESCS) folds into the EGF-like 7 domain. In terms of domain architecture, EGF-like 8; calcium-binding spans 316–352 (NIDDCATAVCFHGATCHDRVASFYCACPMGKTGLLCH). The EGF-like 9 domain occupies 353–391 (LDDACVSNPCHEDAICDTNPVSGRAICTCPPGFTGGACD). The region spanning 393-431 (DVDECSIGANPCEHLGRCVNTQGSFLCQCGRGYTGPRCE) is the EGF-like 10; calcium-binding domain. Positions 433–469 (DVNECLSGPCRNQATCLDRIGQFTCICMAGFTGTFCE) constitute an EGF-like 11; calcium-binding domain. The EGF-like 12; calcium-binding domain maps to 471–507 (DIDECQSSPCVNGGVCKDRVNGFSCTCPSGFSGSTCQ). Residues 509 to 545 (DVDECASTPCRNGAKCVDQPDGYECRCAEGFEGTLCE) form the EGF-like 13; calcium-binding domain. In terms of domain architecture, EGF-like 14; calcium-binding spans 547–582 (NVDDCSPDPCHHGRCVDGIASFSCACAPGYTGIRCE). The EGF-like 15; calcium-binding domain occupies 584-620 (QVDECRSQPCRYGGKCLDLVDKYLCRCPPGTTGVNCE). An EGF-like 16; calcium-binding domain is found at 622-657 (NIDDCASNPCTFGVCRDGINRYDCVCQPGFTGPLCN). The region spanning 659-695 (EINECASSPCGEGGSCVDGENGFHCLCPPGSLPPLCL) is the EGF-like 17; calcium-binding domain. EGF-like domains follow at residues 697 to 732 (ANHP…PRCS), 736 to 772 (APDA…HQCE), and 773 to 810 (VLSP…PRCQ). The region spanning 812-849 (DVDECAGASPCGPHGTCTNLPGSFRCICHGGYTGPFCD) is the EGF-like 21; calcium-binding domain. One can recognise an EGF-like 22; calcium-binding domain in the interval 851–887 (DIDDCDPNPCLNGGSCQDGVGSFSCSCLSGFAGPRCA). Residues 889–924 (DVDECLSSPCGPGTCTDHVASFTCTCPPGYGGFHCE) form the EGF-like 23; calcium-binding domain. EGF-like domains follow at residues 926 to 962 (DLLD…THCQ), 964 to 1000 (KVDP…NQCQ), 1002 to 1036 (PVDW…PLCD), 1038 to 1084 (PSLP…SHCE), and 1086 to 1122 (EVDP…DSCE). The EGF-like 29; calcium-binding domain occupies 1124–1160 (DVDECASQPCQNGGSCIDLVAHYLCSCPPGTLGVLCE). Positions 1162-1205 (NEDDCGPGPSLDSGLRCLHNGTCVDLVGGFRCNCPPGYTGLHCE) constitute an EGF-like 30; calcium-binding domain. N1181 carries an N-linked (GlcNAc...) asparagine glycan. EGF-like domains lie at 1207-1246 (DINE…PRCQ), 1248-1289 (ALFP…LRCE), 1291-1327 (VARS…PSCR), and 1337-1375 (TNTS…PRCE). N-linked (GlcNAc...) asparagine glycosylation is present at N1338. Cystine bridges form between C1341-C1352, C1346-C1363, C1365-C1374, C1389-C1412, C1394-C1407, C1403-C1419, C1430-C1453, C1435-C1448, C1444-C1460, C1469-C1495, C1477-C1490, and C1486-C1502. 3 LNR repeats span residues 1389–1429 (CPRA…PWRQ), 1430–1467 (CEAL…GRDR), and 1469–1507 (CNPV…SEVP). N-linked (GlcNAc...) asparagine glycosylation is present at N1440. A helical membrane pass occupies residues 1646-1666 (LPLLVAGAVFLLVIFVLGVMV). The Cytoplasmic segment spans residues 1667–2319 (ARRKREHSTL…EVTPKRQVMA (653 aa)). ANK repeat units follow at residues 1840–1869 (TGET…DTNA), 1873–1903 (SGRT…DLDA), 1907–1936 (DGST…DVNA), 1940–1969 (LGKS…NKDM), and 1973–2002 (KEET…NREI). Disordered stretches follow at residues 2026–2046 (LDQP…PLLC) and 2059–2129 (QSGT…EGPY). Over residues 2029-2046 (PSGPRSPSGPHGLGPLLC) the composition is skewed to low complexity. The residue at position 2175 (R2175) is an Omega-N-methylarginine. Residues 2197–2319 (LNPATPVSPH…EVTPKRQVMA (123 aa)) form a disordered region. A compositionally biased stretch (low complexity) spans 2263–2288 (SLSDWSDSTPSPATATSATAAGALPA). Residues 2297-2306 (SLPQSQTQLG) show a composition bias toward polar residues.

The protein belongs to the NOTCH family. In terms of assembly, heterodimer of a C-terminal fragment N(TM) and a N-terminal fragment N(EC) which are probably linked by disulfide bonds. Interacts with MAML1, MAML2 and MAML3 which act as transcriptional coactivators for NOTCH3. Interacts with PSMA1. Interacts with HIF1AN. In terms of processing, synthesized in the endoplasmic reticulum as an inactive form which is proteolytically cleaved by a furin-like convertase in the trans-Golgi network before it reaches the plasma membrane to yield an active, ligand-accessible form. Cleavage results in a C-terminal fragment N(TM) and a N-terminal fragment N(EC). Following ligand binding, it is cleaved by TNF-alpha converting enzyme (TACE) to yield a membrane-associated intermediate fragment called notch extracellular truncation (NEXT). This fragment is then cleaved by presenilin dependent gamma-secretase to release a notch-derived peptide containing the intracellular domain (NICD) from the membrane. Post-translationally, phosphorylated. Hydroxylated by HIF1AN. Expressed in postnatal central nervous system (CNS) germinal zones and, in early postnatal life, within numerous cells throughout the CNS. It is more highly localized to ventricular germinal zones.

The protein resides in the cell membrane. It is found in the nucleus. Functionally, functions as a receptor for membrane-bound ligands Jagged1, Jagged2 and Delta1 to regulate cell-fate determination. Upon ligand activation through the released notch intracellular domain (NICD) it forms a transcriptional activator complex with RBPJ/RBPSUH and activates genes of the enhancer of split locus. Affects the implementation of differentiation, proliferation and apoptotic programs. Acts instructively to control the cell fate determination of CNS multipotent progenitor cells, resulting in astroglial induction and neuron/oligodendrocyte suppression. The sequence is that of Neurogenic locus notch homolog protein 3 (Notch3) from Rattus norvegicus (Rat).